Reading from the N-terminus, the 203-residue chain is MVKKAIFGGTFDPIHNGHIHIAYEAIYRLGLDEIVFMPTGNPPHKAKKSITDAFLRYEMVKVAIRSESKFTVSNYEVNKTTLSYTYSTLEHFNKLESKTEWYFLTGADCLMDIEKWSRVDSIFRLCKFIVFNRPGFPAFTSESIEDQKKKIEDKYSTNIIYLDAPLFDISSTVIRNSVKEGKNVNYFLPESVCNIIKQLNLYK.

The protein belongs to the NadD family.

It carries out the reaction nicotinate beta-D-ribonucleotide + ATP + H(+) = deamido-NAD(+) + diphosphate. The protein operates within cofactor biosynthesis; NAD(+) biosynthesis; deamido-NAD(+) from nicotinate D-ribonucleotide: step 1/1. In terms of biological role, catalyzes the reversible adenylation of nicotinate mononucleotide (NaMN) to nicotinic acid adenine dinucleotide (NaAD). The polypeptide is Probable nicotinate-nucleotide adenylyltransferase (Clostridium kluyveri (strain ATCC 8527 / DSM 555 / NBRC 12016 / NCIMB 10680 / K1)).